A 286-amino-acid chain; its full sequence is Structure-specific endonuclease subunit SLX1 (286 aa).

In terms of domain architecture, GIY-YIG spans 15–98; sequence SFYGVYILKS…QHAYQTRHIN (84 aa).

Belongs to the SLX1 family. As to quaternary structure, forms a heterodimer with SLX4. The cofactor is a divalent metal cation.

It localises to the nucleus. Functionally, catalytic subunit of the SLX1-SLX4 structure-specific endonuclease that resolves DNA secondary structures generated during DNA repair and recombination. Has endonuclease activity towards branched DNA substrates, introducing single-strand cuts in duplex DNA close to junctions with ss-DNA. This Candida dubliniensis (strain CD36 / ATCC MYA-646 / CBS 7987 / NCPF 3949 / NRRL Y-17841) (Yeast) protein is Structure-specific endonuclease subunit SLX1.